A 373-amino-acid polypeptide reads, in one-letter code: D-alanine--D-alanine ligase A (373 aa).

The ATP-grasp domain occupies 146–355 (KRLAEFAGIP…YGELLSRLVD (210 aa)). Residue 179–234 (VEGLSLPVFVKPCNMGSSVGIHKVKTQDALEAALDDAFRYDVKVLVQQGIDAREIE) participates in ATP binding. Residues Asp308, Glu322, and Asn324 each coordinate Mg(2+).

Belongs to the D-alanine--D-alanine ligase family. It depends on Mg(2+) as a cofactor. The cofactor is Mn(2+).

Its subcellular location is the cytoplasm. It carries out the reaction 2 D-alanine + ATP = D-alanyl-D-alanine + ADP + phosphate + H(+). It participates in cell wall biogenesis; peptidoglycan biosynthesis. In terms of biological role, cell wall formation. The chain is D-alanine--D-alanine ligase A from Bradyrhizobium diazoefficiens (strain JCM 10833 / BCRC 13528 / IAM 13628 / NBRC 14792 / USDA 110).